A 146-amino-acid polypeptide reads, in one-letter code: Flagellar assembly factor FliW (146 aa).

The protein belongs to the FliW family. In terms of assembly, interacts with translational regulator CsrA and flagellin(s).

Its subcellular location is the cytoplasm. Its function is as follows. Acts as an anti-CsrA protein, binds CsrA and prevents it from repressing translation of its target genes, one of which is flagellin. Binds to flagellin and participates in the assembly of the flagellum. The chain is Flagellar assembly factor FliW from Azoarcus sp. (strain BH72).